A 275-amino-acid chain; its full sequence is S-formylglutathione hydrolase (275 aa).

Catalysis depends on charge relay system residues serine 145, aspartate 221, and histidine 254.

This sequence belongs to the esterase D family.

It carries out the reaction S-formylglutathione + H2O = formate + glutathione + H(+). Functionally, serine hydrolase involved in the detoxification of formaldehyde. Hydrolyzes S-formylglutathione to glutathione and formate. The chain is S-formylglutathione hydrolase from Haemophilus influenzae (strain ATCC 51907 / DSM 11121 / KW20 / Rd).